Reading from the N-terminus, the 175-residue chain is Ribosome maturation factor RimM (175 aa).

In terms of domain architecture, PRC barrel spans 96–175; the sequence is DGDYYWKDLI…IIKVDWDPEF (80 aa).

It belongs to the RimM family. Binds ribosomal protein uS19.

It is found in the cytoplasm. Functionally, an accessory protein needed during the final step in the assembly of 30S ribosomal subunit, possibly for assembly of the head region. Essential for efficient processing of 16S rRNA. May be needed both before and after RbfA during the maturation of 16S rRNA. It has affinity for free ribosomal 30S subunits but not for 70S ribosomes. The polypeptide is Ribosome maturation factor RimM (Baumannia cicadellinicola subsp. Homalodisca coagulata).